The primary structure comprises 605 residues: Arginine--tRNA ligase (605 aa).

Positions 131-141 (ANPTGPMHVGH) match the 'HIGH' region motif. The segment at 290-309 (PPPKSKKGQPAPAQAASNSA) is disordered. Low complexity predominate over residues 298 to 309 (QPAPAQAASNSA).

The protein belongs to the class-I aminoacyl-tRNA synthetase family. As to quaternary structure, monomer.

It is found in the cytoplasm. The enzyme catalyses tRNA(Arg) + L-arginine + ATP = L-arginyl-tRNA(Arg) + AMP + diphosphate. The chain is Arginine--tRNA ligase from Anaeromyxobacter sp. (strain Fw109-5).